The following is a 204-amino-acid chain: Urease accessory protein UreG (204 aa).

12 to 19 (GPVGSGKT) contributes to the GTP binding site.

The protein belongs to the SIMIBI class G3E GTPase family. UreG subfamily. Homodimer. UreD, UreF and UreG form a complex that acts as a GTP-hydrolysis-dependent molecular chaperone, activating the urease apoprotein by helping to assemble the nickel containing metallocenter of UreC. The UreE protein probably delivers the nickel.

It is found in the cytoplasm. Functionally, facilitates the functional incorporation of the urease nickel metallocenter. This process requires GTP hydrolysis, probably effectuated by UreG. The protein is Urease accessory protein UreG of Pseudomonas fluorescens (strain Pf0-1).